We begin with the raw amino-acid sequence, 664 residues long: Alpha-1,4-glucan:maltose-1-phosphate maltosyltransferase (664 aa).

Lys-261, Gln-321, and Asp-356 together coordinate alpha-maltose 1-phosphate. Asp-393 (nucleophile) is an active-site residue. Asn-394 contacts alpha-maltose 1-phosphate. Glu-422 acts as the Proton donor in catalysis. 533-534 contacts alpha-maltose 1-phosphate; the sequence is KY.

It belongs to the glycosyl hydrolase 13 family. GlgE subfamily. As to quaternary structure, homodimer.

It catalyses the reaction alpha-maltose 1-phosphate + [(1-&gt;4)-alpha-D-glucosyl](n) = [(1-&gt;4)-alpha-D-glucosyl](n+2) + phosphate. Maltosyltransferase that uses maltose 1-phosphate (M1P) as the sugar donor to elongate linear or branched alpha-(1-&gt;4)-glucans. Is involved in a branched alpha-glucan biosynthetic pathway from trehalose, together with TreS, Mak and GlgB. The polypeptide is Alpha-1,4-glucan:maltose-1-phosphate maltosyltransferase (Pseudomonas aeruginosa (strain ATCC 15692 / DSM 22644 / CIP 104116 / JCM 14847 / LMG 12228 / 1C / PRS 101 / PAO1)).